Here is a 246-residue protein sequence, read N- to C-terminus: Uridylate kinase (246 aa).

An ATP-binding site is contributed by 11-14; it reads KISG. Gly-53 lines the UMP pocket. Gly-54 and Arg-58 together coordinate ATP. UMP-binding positions include Asp-74 and 135–142; that span reads TGSPYLTT. The ATP site is built by Thr-162, Tyr-169, and Asp-172.

It belongs to the UMP kinase family. Homohexamer.

Its subcellular location is the cytoplasm. The enzyme catalyses UMP + ATP = UDP + ADP. The protein operates within pyrimidine metabolism; CTP biosynthesis via de novo pathway; UDP from UMP (UMPK route): step 1/1. Its activity is regulated as follows. Inhibited by UTP. Catalyzes the reversible phosphorylation of UMP to UDP. This chain is Uridylate kinase, found in Chlamydia abortus (strain DSM 27085 / S26/3) (Chlamydophila abortus).